The primary structure comprises 439 residues: MLKIFNTLTRQKEEFKPIHAGEVGMYVCGITVYDLCHIGHGRTFVAFDVVARYLRFLGYKLKYVRNITDIDDKIIKRANENGESFVALVDRMIAEMHKDFDALNILRPDMEPRATHHIAEIIELTEQLIAKGHAYVADNGDVMFDVPTDPTYGVLSRQDLDQLQAGARVDVVDDKRNPMDFVLWKMSKEGEPSWPSPWGAGRPGWHIECSAMNCKQLGNHFDIHGGGSDLMFPHHENEIAQSTCAHDGQYVNYWMHSGMVMVDREKMSKSLGNFFTVRDVLKYYDAETVRYFLMSGHYRSQLNYSEENLKQTRAALERLYTALRGTDKTVAPAGGEAFEARFIEAMDDDFNTPEAYSVLFDMAREVNRLKAEDMAAANAMASHLRKLSAVLGLLEQEPEAFLQSGAQADDSEVAEIEALIQQRLDARKAKDWAGGRCGT.

C28 is a binding site for Zn(2+). Residues 30–40 carry the 'HIGH' region motif; it reads ITVYDLCHIGH. Zn(2+) contacts are provided by C209, H234, and E238. Residues 266-270 carry the 'KMSKS' region motif; the sequence is KMSKS. K269 provides a ligand contact to ATP.

The protein belongs to the class-I aminoacyl-tRNA synthetase family. As to quaternary structure, monomer. The cofactor is Zn(2+).

The protein localises to the cytoplasm. The catalysed reaction is tRNA(Cys) + L-cysteine + ATP = L-cysteinyl-tRNA(Cys) + AMP + diphosphate. This chain is Cysteine--tRNA ligase, found in Shigella boydii serotype 4 (strain Sb227).